Here is a 279-residue protein sequence, read N- to C-terminus: S-methyl-5'-thioadenosine phosphorylase (279 aa).

Residues Ser28, 70–71, and 103–104 contribute to the phosphate site; these read RH and SA. Met202 provides a ligand contact to substrate. Residue Thr203 coordinates phosphate. Residue 226-228 participates in substrate binding; the sequence is DYD.

It belongs to the PNP/MTAP phosphorylase family. MTAP subfamily. As to quaternary structure, homohexamer. Dimer of a homotrimer.

The enzyme catalyses S-methyl-5'-thioadenosine + phosphate = 5-(methylsulfanyl)-alpha-D-ribose 1-phosphate + adenine. Its pathway is amino-acid biosynthesis; L-methionine biosynthesis via salvage pathway; S-methyl-5-thio-alpha-D-ribose 1-phosphate from S-methyl-5'-thioadenosine (phosphorylase route): step 1/1. In terms of biological role, catalyzes the reversible phosphorylation of S-methyl-5'-thioadenosine (MTA) to adenine and 5-methylthioribose-1-phosphate. Involved in the breakdown of MTA, a major by-product of polyamine biosynthesis. Responsible for the first step in the methionine salvage pathway after MTA has been generated from S-adenosylmethionine. Has broad substrate specificity with 6-aminopurine nucleosides as preferred substrates. The polypeptide is S-methyl-5'-thioadenosine phosphorylase (Pyrobaculum aerophilum (strain ATCC 51768 / DSM 7523 / JCM 9630 / CIP 104966 / NBRC 100827 / IM2)).